The primary structure comprises 216 residues: Pyridoxine/pyridoxamine 5'-phosphate oxidase (216 aa).

Residues 12 to 15 (RREY) and Lys-70 contribute to the substrate site. Residues 65–70 (RLVLLK), 80–81 (YT), Arg-86, Lys-87, and Gln-109 each bind FMN. Residues Tyr-127, Arg-131, and Ser-135 each contribute to the substrate site. FMN-binding positions include 144–145 (QS) and Trp-189. 195–197 (RLH) lines the substrate pocket. Arg-199 is a binding site for FMN.

This sequence belongs to the pyridoxamine 5'-phosphate oxidase family. In terms of assembly, homodimer. It depends on FMN as a cofactor.

It carries out the reaction pyridoxamine 5'-phosphate + O2 + H2O = pyridoxal 5'-phosphate + H2O2 + NH4(+). The catalysed reaction is pyridoxine 5'-phosphate + O2 = pyridoxal 5'-phosphate + H2O2. It participates in cofactor metabolism; pyridoxal 5'-phosphate salvage; pyridoxal 5'-phosphate from pyridoxamine 5'-phosphate: step 1/1. The protein operates within cofactor metabolism; pyridoxal 5'-phosphate salvage; pyridoxal 5'-phosphate from pyridoxine 5'-phosphate: step 1/1. Functionally, catalyzes the oxidation of either pyridoxine 5'-phosphate (PNP) or pyridoxamine 5'-phosphate (PMP) into pyridoxal 5'-phosphate (PLP). The protein is Pyridoxine/pyridoxamine 5'-phosphate oxidase of Baumannia cicadellinicola subsp. Homalodisca coagulata.